We begin with the raw amino-acid sequence, 359 residues long: Apelin receptor B (359 aa).

Residues 1–36 (MNAMDNMTADYSPDYFDDAVNSSMCEYDEWEPSYSL) are Extracellular-facing. N-linked (GlcNAc...) asparagine glycans are attached at residues Asn-6 and Asn-21. 2 disulfide bridges follow: Cys-25-Cys-288 and Cys-107-Cys-186. Residues 37-57 (IPVLYMLIFILGLTGNGVVIF) traverse the membrane as a helical segment. Residues 58–75 (TVWRAQSKRRAADVYIGN) lie on the Cytoplasmic side of the membrane. The chain crosses the membrane as a helical span at residues 76–96 (LALADLTFVVTLPLWAVYTAL). Over 97–108 (GYHWPFGVALCK) the chain is Extracellular. The chain crosses the membrane as a helical span at residues 109–129 (ISSYVVLLNMYASVFCLTCLS). Residues 130–151 (LDRYMAIVHSLTSTQLRTRGHM) lie on the Cytoplasmic side of the membrane. A helical transmembrane segment spans residues 152-172 (RASLTAIWLLSGVLAAPTLLF). The Extracellular segment spans residues 173-213 (RTTVYDVETNRTSCAMDFNLVVSQPGQETYWIAGLSISSTA). N-linked (GlcNAc...) asparagine glycosylation occurs at Asn-182. The chain crosses the membrane as a helical span at residues 214–234 (LGFLIPLLAMMVCYGFIGCTV). Topologically, residues 235-251 (TRHFNSLRKEDQRKRRL) are cytoplasmic. Residues 252–272 (LKIITTLVVVFAACWMPFHVV) traverse the membrane as a helical segment. Over 273–286 (KTMDALSYLNLAPD) the chain is Extracellular. The chain crosses the membrane as a helical span at residues 287-307 (SCTFLNLLLLAHPYATCLAYV). Topologically, residues 308–359 (NSCLNPLLYAFFDLRFRSQCLCLLNLKKALHASPASSLSSQKTEAQSLATKV) are cytoplasmic.

It belongs to the G-protein coupled receptor 1 family. In terms of tissue distribution, mesendodermal expression at the blastoderm margin appears by 4.5 hpf. At early gastrulation, expression is maintained ventrolaterally while expression in dorsal cells and random deep cells declines. During gastrulation and segmentation, expression is maintained in adaxial, intermediate, and lateral plate mesoderm. During late segmentation, expressed in several regions including the forming heart. By 24 hpf, expressed in the dorsal aorta, caudal vein, and intersomitic blood vessels.

Its subcellular location is the cell membrane. Functionally, g protein-coupled receptor for peptide hormones apelin (apln) and apelin receptor early endogenous ligand (apela), that plays a role in the regulation of normal cardiovascular function and fluid homeostasis. When acting as apelin receptor, activates both G(i) protein pathway that inhibits adenylate cyclase activity, and the beta-arrestin pathway that promotes internalization of the receptor. Also functions as mechanoreceptor that is activated by pathological stimuli in a G-protein-independent fashion to induce beta-arrestin signaling, hence eliciting cardiac hypertrophy. However, the presence of apelin ligand blunts cardiac hypertrophic induction from APLNR/APJ on response to pathological stimuli. Plays a key role in early development such as gastrulation, blood vessels formation and heart morphogenesis by acting as a receptor for apela hormone, promoting endoderm and mesendoderm cell migration and regulating the migration of cells fated to become myocardial progenitors, respectively. Positively regulates angioblast migration toward the embryonic midline, i.e. the position of the future vessel formation, during vasculogenesis. May promote sinus venosus (SV)-derived endothelial cells migration into the developing heart to promote coronary blood vessel development. Required for cardiovascular development, particularly for intersomitic vein angiogenesis by acting as a receptor for apln hormone. Plays a role in various processes in adults such as regulation of blood vessel formation, blood pressure, heart contractility and heart failure. Acts redundantly with agtrl1a in heart development. G protein-coupled receptor for peptide hormones apelin (APLN) and apelin receptor early endogenous ligand (APELA/ELA), that plays a role in the regulation of normal cardiovascular function and fluid homeostasis. When acting as apelin receptor, activates both G(i) protein pathway that inhibits adenylate cyclase activity, and the beta-arrestin pathway that promotes internalization of the receptor. APLNR/APJ also functions as mechanoreceptor that is activated by pathological stimuli in a G-protein-independent fashion to induce beta-arrestin signaling, hence eliciting cardiac hypertrophy. Plays a key role in early development such as gastrulation, blood vessels formation and heart morphogenesis by acting as a APELA receptor. May promote angioblast migration toward the embryonic midline, i.e. the position of the future vessel formation, during vasculogenesis. Promotes sinus venosus (SV)-derived endothelial cells migration into the developing heart to promote coronary blood vessel development. Also plays a role in various processes in adults such as regulation of blood vessel formation, blood pressure, heart contractility and heart failure. This chain is Apelin receptor B (aplnrb), found in Danio rerio (Zebrafish).